Reading from the N-terminus, the 477-residue chain is Glycogen synthase (477 aa).

Residue K15 coordinates ADP-alpha-D-glucose.

This sequence belongs to the glycosyltransferase 1 family. Bacterial/plant glycogen synthase subfamily.

The enzyme catalyses [(1-&gt;4)-alpha-D-glucosyl](n) + ADP-alpha-D-glucose = [(1-&gt;4)-alpha-D-glucosyl](n+1) + ADP + H(+). Its pathway is glycan biosynthesis; glycogen biosynthesis. Functionally, synthesizes alpha-1,4-glucan chains using ADP-glucose. This is Glycogen synthase from Streptococcus pneumoniae serotype 4 (strain ATCC BAA-334 / TIGR4).